Consider the following 201-residue polypeptide: Protease (201 aa).

Catalysis depends on residues histidine 56, aspartate 73, and cysteine 121.

This sequence belongs to the peptidase C5 family. As to quaternary structure, interacts with protease cofactor pVI-C; this interaction is necessary for protease activation.

It localises to the virion. The protein localises to the host nucleus. The catalysed reaction is Cleaves proteins of the adenovirus and its host cell at two consensus sites: -Yaa-Xaa-Gly-Gly-|-Xaa- and -Yaa-Xaa-Gly-Xaa-|-Gly- (in which Yaa is Met, Ile or Leu, and Xaa is any amino acid).. Requires DNA and protease cofactor for maximal activation. Inside nascent virions, becomes partially activated by binding to the viral DNA, allowing it to cleave the cofactor that binds to the protease and fully activates it. Actin, like the viral protease cofactor, seems to act as a cofactor in the cleavage of cytokeratin 18 and of actin itself. Cleaves viral precursor proteins (pTP, pIIIa, pVI, pVII, pVIII, and pX) inside newly assembled particles giving rise to mature virions. Protease complexed to its cofactor slides along the viral DNA to specifically locate and cleave the viral precursors. Mature virions have a weakened organization compared to the unmature virions, thereby facilitating subsequent uncoating. Without maturation, the particle lacks infectivity and is unable to uncoat. Late in adenovirus infection, in the cytoplasm, may participate in the cytoskeleton destruction. Cleaves host cell cytoskeletal keratins K7 and K18. The protein is Protease of Homo sapiens (Human).